Reading from the N-terminus, the 1180-residue chain is Integrin alpha-1 (1180 aa).

The signal sequence occupies residues 1-28; that stretch reads MVPRRPASLEVTVACIWLLTVILGFCVS. Residues 29 to 1142 lie on the Extracellular side of the membrane; sequence FNVDVKNSMS…SKDGLPGRVP (1114 aa). The stretch at 30–91 is one FG-GAP 1 repeat; that stretch reads NVDVKNSMSF…CPVGRERAMP (62 aa). Cysteine 82 and cysteine 92 form a disulfide bridge. N-linked (GlcNAc...) asparagine glycans are attached at residues asparagine 100, asparagine 105, asparagine 112, asparagine 217, asparagine 317, asparagine 341, asparagine 402, asparagine 418, and asparagine 459. The FG-GAP 2 repeat unit spans residues 101 to 160; it reads TSIPNVTEIKENMTFGSTLVTNPNGGFLACGPLYAYRCGHLHYTTGICSDVSPTFQVVNS. In terms of domain architecture, VWFA spans 175-364; the sequence is IVLDGSNSIY…LGERIFALEA (190 aa). An FG-GAP 3 repeat occupies 365–417; the sequence is TADQSAASFEMEMSQTGFSAHYSQDWVMLGAVGAYDWNGTVVMQKANQMVIPH. FG-GAP repeat units lie at residues 422 to 474, 475 to 537, 556 to 614, and 618 to 678; these read QTEP…DGNI, NILQ…RFEY, SCTK…TIRE, and QRIP…FEPN. Residues aspartate 497, aspartate 499, aspartate 501, and aspartate 505 each coordinate Ca(2+). Asparagine 531 is a glycosylation site (N-linked (GlcNAc...) asparagine). Aspartate 579, asparagine 581, aspartate 583, aspartate 587, aspartate 641, asparagine 643, aspartate 645, and aspartate 649 together coordinate Ca(2+). Cysteine 687 and cysteine 696 form a disulfide bridge. N-linked (GlcNAc...) asparagine glycosylation is found at asparagine 698, asparagine 747, and asparagine 779. Residues cysteine 702 and cysteine 755 are joined by a disulfide bond. Cysteine 807 and cysteine 813 are oxidised to a cystine. N-linked (GlcNAc...) asparagine glycosylation is found at asparagine 820, asparagine 839, asparagine 882, asparagine 907, asparagine 938, asparagine 965, asparagine 973, and asparagine 1007. A disulfide bond links cysteine 877 and cysteine 885. Cystine bridges form between cysteine 1029–cysteine 1062 and cysteine 1066–cysteine 1073. N-linked (GlcNAc...) asparagine glycans are attached at residues asparagine 1084, asparagine 1103, and asparagine 1114. Residues 1143–1165 traverse the membrane as a helical segment; it reads LWVILLSAFAGLLLLMLLILALW. At 1166–1180 the chain is on the cytoplasmic side; the sequence is KIGFFKRPLKKKMEK. Positions 1168–1172 match the GFFKR motif motif; that stretch reads GFFKR.

Belongs to the integrin alpha chain family. In terms of assembly, heterodimer of an alpha and a beta subunit. Alpha-1 associates with beta-1. Interacts with RAB21. Interacts (via cytoplasmic domain) with PTPN2; activates PTPN2 phosphatase activity towards EGFR and negatively regulates EGF signaling.

It localises to the membrane. Its function is as follows. Integrin alpha-1/beta-1 is a receptor for laminin and collagen. It recognizes the proline-hydroxylated sequence G-F-P-G-E-R in collagen. Involved in anchorage-dependent, negative regulation of EGF-stimulated cell growth. The sequence is that of Integrin alpha-1 (Itga1) from Rattus norvegicus (Rat).